Consider the following 326-residue polypeptide: Beta-ketoacyl-[acyl-carrier-protein] synthase III (326 aa).

Active-site residues include C112 and H251. The tract at residues 252 to 256 (QANSR) is ACP-binding. Residue N281 is part of the active site.

Belongs to the thiolase-like superfamily. FabH family. As to quaternary structure, homodimer.

The protein localises to the cytoplasm. It carries out the reaction malonyl-[ACP] + acetyl-CoA + H(+) = 3-oxobutanoyl-[ACP] + CO2 + CoA. It functions in the pathway lipid metabolism; fatty acid biosynthesis. In terms of biological role, catalyzes the condensation reaction of fatty acid synthesis by the addition to an acyl acceptor of two carbons from malonyl-ACP. Catalyzes the first condensation reaction which initiates fatty acid synthesis and may therefore play a role in governing the total rate of fatty acid production. Possesses both acetoacetyl-ACP synthase and acetyl transacylase activities. Its substrate specificity determines the biosynthesis of branched-chain and/or straight-chain of fatty acids. In Clostridium botulinum (strain ATCC 19397 / Type A), this protein is Beta-ketoacyl-[acyl-carrier-protein] synthase III.